The sequence spans 399 residues: Enoyl-[acyl-carrier-protein] reductase [NADH] (399 aa).

NAD(+)-binding positions include 48 to 53 (GASTGY), 74 to 75 (FE), 111 to 112 (DA), and 139 to 140 (LA). Tyr225 is a substrate binding site. The active-site Proton donor is Tyr235. Residues Lys244 and 274–276 (VVT) each bind NAD(+).

The protein belongs to the TER reductase family. In terms of assembly, monomer.

It catalyses the reaction a 2,3-saturated acyl-[ACP] + NAD(+) = a (2E)-enoyl-[ACP] + NADH + H(+). The protein operates within lipid metabolism; fatty acid biosynthesis. Involved in the final reduction of the elongation cycle of fatty acid synthesis (FAS II). Catalyzes the reduction of a carbon-carbon double bond in an enoyl moiety that is covalently linked to an acyl carrier protein (ACP). The protein is Enoyl-[acyl-carrier-protein] reductase [NADH] of Yersinia pseudotuberculosis serotype O:1b (strain IP 31758).